The following is a 1037-amino-acid chain: Tyrosine-protein kinase-like otk (1037 aa).

Residues 1–23 (MDMDVMMISMCILASTFMAPGWA) form the signal peptide. Ig-like C2-type domains are found at residues 24-109 (STSG…REAS), 110-199 (PPAK…RVMS), 251-365 (PEDL…APLN), 368-464 (PGLL…VSIN), and 469-559 (PKFS…VQLV). The Extracellular portion of the chain corresponds to 24 to 582 (STSGFLRVPQ…GGDGFLVTRA (559 aa)). 5 disulfide bridges follow: Cys47–Cys96, Cys138–Cys188, Cys276–Cys354, Cys399–Cys448, and Cys491–Cys543. Residues Asn336, Asn418, Asn430, Asn445, Asn513, and Asn525 are each glycosylated (N-linked (GlcNAc...) asparagine). Residues 583–603 (VLITMTVALAYIVLVVGLMLW) form a helical membrane-spanning segment. The Cytoplasmic portion of the chain corresponds to 604 to 1037 (CRYRRQARKA…SKAMQSVAEK (434 aa)). Disordered stretches follow at residues 623-683 (AGGD…KSVY) and 720-777 (SAQS…KEEE). Residues 658 to 676 (KSNGDAQKSDDTACSQQSR) show a composition bias toward polar residues. Phosphoserine is present on Ser681. A Protein kinase; inactive domain is found at 693 to 1031 (LSELLQIGRG…QLGSALSKAM (339 aa)). Basic and acidic residues predominate over residues 723-734 (SDKDADTEKQHS). Positions 739 to 749 (GSGGSGSGSGS) are enriched in gly residues. The span at 768 to 777 (DDIEEIKEEE) shows a compositional bias: acidic residues.

It belongs to the protein kinase superfamily. Tyr protein kinase family. Insulin receptor subfamily. Interacts with plexA; component of a receptor complex that mediates the repulsive signaling in response to Semaphorin ligands.

The protein resides in the cell membrane. Acts as a calcium-dependent, homophilic cell adhesion molecule that regulates neural recognition during the development of the nervous system. Component of the repulsive Plexin signaling response to regulate motor axon guidance at the embryonic stage. Also component of a receptor complex that is required in the adult visual system to innervate the lamina layer; specific targeting of R1-R6 axons. The protein is Tyrosine-protein kinase-like otk of Drosophila pseudoobscura pseudoobscura (Fruit fly).